We begin with the raw amino-acid sequence, 457 residues long: Multidrug resistance protein MdtK (457 aa).

The next 12 membrane-spanning stretches (helical) occupy residues 11–31, 53–73, 93–113, 127–147, 159–179, 190–210, 249–269, 276–296, 313–333, 357–377, 387–407, and 417–437; these read LSAL…MGVV, IWLP…PVVA, FLAA…EYAI, AIGY…YQVL, PGMM…YIFI, GVGC…LMML, LLFE…LGVV, IALN…VATT, IAAH…AIFT, LMLL…GTGV, IFYI…YLLA, and GPAG…VMMV.

It belongs to the multi antimicrobial extrusion (MATE) (TC 2.A.66.1) family. MdtK subfamily.

The protein resides in the cell inner membrane. Its function is as follows. Multidrug efflux pump that functions probably as a Na(+)/drug antiporter. The sequence is that of Multidrug resistance protein MdtK from Pectobacterium atrosepticum (strain SCRI 1043 / ATCC BAA-672) (Erwinia carotovora subsp. atroseptica).